The primary structure comprises 561 residues: Long-chain-fatty-acid--CoA ligase (561 aa).

Residue 213–224 (YTGGTTGVAKGA) coordinates ATP.

Belongs to the ATP-dependent AMP-binding enzyme family. The cofactor is Mg(2+).

It localises to the membrane. The enzyme catalyses a long-chain fatty acid + ATP + CoA = a long-chain fatty acyl-CoA + AMP + diphosphate. Its pathway is lipid metabolism; fatty acid beta-oxidation. In terms of biological role, catalyzes the esterification, concomitant with transport, of exogenous long-chain fatty acids into metabolically active CoA thioesters for subsequent degradation or incorporation into phospholipids. In Salmonella typhi, this protein is Long-chain-fatty-acid--CoA ligase (fadD).